The sequence spans 418 residues: Gamma-glutamyl phosphate reductase (418 aa).

It belongs to the gamma-glutamyl phosphate reductase family.

It is found in the cytoplasm. It catalyses the reaction L-glutamate 5-semialdehyde + phosphate + NADP(+) = L-glutamyl 5-phosphate + NADPH + H(+). Its pathway is amino-acid biosynthesis; L-proline biosynthesis; L-glutamate 5-semialdehyde from L-glutamate: step 2/2. Catalyzes the NADPH-dependent reduction of L-glutamate 5-phosphate into L-glutamate 5-semialdehyde and phosphate. The product spontaneously undergoes cyclization to form 1-pyrroline-5-carboxylate. In Thermobifida fusca (strain YX), this protein is Gamma-glutamyl phosphate reductase.